The sequence spans 931 residues: GPI ethanolamine phosphate transferase 1 (931 aa).

A topological domain (cytoplasmic) is located at residue M1. Residues 2 to 22 (LLFFALGLLIHFVFFASIFDI) traverse the membrane as a helical segment. The Lumenal portion of the chain corresponds to 23 to 442 (YFTSPLVHGM…SYYHTYDRLF (420 aa)). N-linked (GlcNAc...) asparagine glycosylation is found at N128, N192, N295, and N350. The chain crosses the membrane as a helical span at residues 443 to 463 (LGINVAVGFVGWMSYTSLLII). Over 464 to 480 (KSHSNIPKGTRKEGKKP) the chain is Cytoplasmic. The helical transmembrane segment at 481–501 (HCLLLYSFIATGVLVACFLMI) threads the bilayer. A topological domain (lumenal) is located at residue Q502. The chain crosses the membrane as a helical span at residues 503–523 (ACPWTYYVYCLLPVPIWYAVL). At 524 to 543 (REHEVIQDLVESLLTFPRSH) the chain is on the cytoplasmic side. The helical transmembrane segment at 544–564 (FVAYLLVFTLGIEVLVLSFFY) threads the bilayer. A topological domain (lumenal) is located at residue R565. The chain crosses the membrane as a helical span at residues 566–586 (YMLTAGLIVFAGWPFLTQLWT). The Cytoplasmic segment spans residues 587–591 (RAKIT). The chain crosses the membrane as a helical span at residues 592–612 (FLSWAFFSLLLAVFPLMPVVG). Over 613-618 (RKPNLS) the chain is Lumenal. N616 carries an N-linked (GlcNAc...) asparagine glycan. A helical membrane pass occupies residues 619–639 (LVMGAGFLVLLLSLAVVTTLG). The Cytoplasmic segment spans residues 640–649 (KRNIKLVKGE). The helical transmembrane segment at 650–670 (LLVLLLQMLSTVLSMYVVYST) threads the bilayer. The Lumenal segment spans residues 671 to 685 (HHSLLKKEGLPLMNQ). Residues 686–706 (IVSWATLASSLVAPLLSSTAL) form a helical membrane-spanning segment. Residues 707–723 (SQRLASILLSLMSTYLL) are Cytoplasmic-facing. Residues 724-744 (LSTGYEALFPLVLSCLMFVWI) traverse the membrane as a helical segment. Topologically, residues 745-786 (QVEQETLQQPGVSCKQKLTSIQFTCDTDIAQFRQLCPDDIRR) are lumenal. A helical membrane pass occupies residues 787 to 807 (AFFLVFFLLTAFFGTGNIASI). Residues 808–824 (NSFDLASVYCFLTVFSP) lie on the Cytoplasmic side of the membrane. A helical transmembrane segment spans residues 825–845 (FMMGALMMWKILIPFVLVMCA). The Lumenal segment spans residues 846 to 858 (FEAVQITTQLSSK). Residues 859–879 (GLFLVVLIISDIMALHFFFLV) form a helical membrane-spanning segment. The Cytoplasmic portion of the chain corresponds to 880–894 (KDSGSWLDIGTSISH). The helical transmembrane segment at 895–915 (YVIVMSMTIFLVFLNGLAQLL) threads the bilayer. Residues 916 to 931 (TTKKLQLCGKPKSHLM) are Lumenal-facing.

The protein belongs to the PIGG/PIGN/PIGO family. PIGN subfamily.

It is found in the endoplasmic reticulum membrane. It functions in the pathway glycolipid biosynthesis; glycosylphosphatidylinositol-anchor biosynthesis. Functionally, ethanolamine phosphate transferase that catalyzes an ethanolamine phosphate (EtNP) transfer from phosphatidylethanolamine (PE) to the 2-OH position of the first alpha-1,4-linked mannose of the alpha-D-Man-(1-&gt;6)-alpha-D-Man-(1-&gt;4)-alpha-D-GlcN-(1-&gt;6)-(1-radyl,2-acyl-sn-glycero-3-phospho)-2-acyl-inositol (also termed H3) intermediate to generate an alpha-D-Man-(1-&gt;6)-2-PEtn-alpha-D-Man-(1-&gt;4)-alpha-D-GlcN-(1-&gt;6)-(1-radyl,2-acyl-sn-glycero-3-phospho)-2-acyl-inositol and participates in the eighth step of the glycosylphosphatidylinositol-anchor biosynthesis. May act as suppressor of replication stress and chromosome missegregation. This is GPI ethanolamine phosphate transferase 1 from Mus musculus (Mouse).